The chain runs to 408 residues: Acetate kinase (408 aa).

Asparagine 7 contributes to the Mg(2+) binding site. Lysine 14 contacts ATP. Arginine 91 lines the substrate pocket. Aspartate 148 serves as the catalytic Proton donor/acceptor. ATP contacts are provided by residues 208–212 (HLGNG), 283–285 (DFR), and 331–335 (GIGEN). Glutamate 384 provides a ligand contact to Mg(2+).

The protein belongs to the acetokinase family. In terms of assembly, homodimer. Mg(2+) serves as cofactor. Requires Mn(2+) as cofactor.

The protein resides in the cytoplasm. The catalysed reaction is acetate + ATP = acetyl phosphate + ADP. The protein operates within metabolic intermediate biosynthesis; acetyl-CoA biosynthesis; acetyl-CoA from acetate: step 1/2. Its function is as follows. Catalyzes the formation of acetyl phosphate from acetate and ATP. Can also catalyze the reverse reaction. The protein is Acetate kinase of Methanosarcina mazei (strain ATCC BAA-159 / DSM 3647 / Goe1 / Go1 / JCM 11833 / OCM 88) (Methanosarcina frisia).